The following is a 790-amino-acid chain: F-box and leucine-rich repeat protein 13 (790 aa).

The F-box domain occupies 237–283; sequence AFDISVLPEQAILQIFLYLTFKDMMACSRVNRSWMAMIQRGSLWNSI. LRR repeat units follow at residues 503–525, 531–552, 557–579, 582–602, 606–628, and 632–657; these read QLTV…HFFD, RLRE…IRLS, NLHY…YIAS, SLIS…TILS, KLRE…AYCK, and LLEH…IFCT.

This sequence belongs to the DRC6 family. As to quaternary structure, component of the nexin-dynein regulatory complex (N-DRC). Directly interacts with SKP1 and CUL1. Interacts with TCTE1/DRC5.

It localises to the cytoplasm. Its subcellular location is the cytoskeleton. It is found in the flagellum axoneme. The protein localises to the microtubule organizing center. The protein resides in the centrosome. Substrate-recognition component of the SCF (SKP1-CUL1-F-box protein)-type E3 ubiquitin ligase complex. Component of the nexin-dynein regulatory complex (N-DRC), a key regulator of ciliary/flagellar motility which maintains the alignment and integrity of the distal axoneme and regulates microtubule sliding in motile axonemes. Specifically targets CEP192 isoform 3 for ubiquitin-mediated proteolysis and thereby acts as a regulator of microtubule nucleation activity. The polypeptide is F-box and leucine-rich repeat protein 13 (Fbxl13) (Mus musculus (Mouse)).